The chain runs to 601 residues: MDWGTELWDQFEVLERHTQWGLDLLDRYVKFVKERTEVEQAYAKQLRSLVKKYLPKRPAKDDPESKFSQQQSFVQILQEVNDFAGQRELVAENLSVRVCLELTKYSQEMKQERKMHFQEGRRAQQQLENGFKQLENSKRKFERDCREAEKAAQTAERLDQDINATKADVEKAKQQAHLRSHMAEESKNEYAAQLQRFNRDQAHFYFSQMPQIFDKLQDMDERRATRLGAGYGLLSEAELEVVPIIAKCLEGMKVAANAVDPKNDSHVLIELHKSGFARPGDVEFEDFSQPMNRAPSDSSLGTPSDGRPELRGPGRSRTKRWPFGKKNKPRPPPLSPLGGPVPSALPNGPPSPRSGRDPLAILSEISKSVKPRLASFRSLRGSRGTVVTEDFSHLPPEQQRKRLQQQLEERSRELQKEVDQREALKKMKDVYEKTPQMGDPASLEPQIAETLSNIERLKLEVQKYEAWLAEAESRVLSNRGDSLSRHARPPDPPASAPPDSSSNSASQDTKESSEEPPSEESQDTPIYTEFDEDFEEEPTSPIGHCVAIYHFEGSSEGTISMAEGEDLSLMEEDKGDGWTRVRRKEGGEGYVPTSYLRVTLN.

A required for podosome formation and interaction with AKAP9 and microtubules region spans residues 1-117; that stretch reads MDWGTELWDQ…EMKQERKMHF (117 aa). Residues 1–117 are required for translocation to the plasma membrane in response to insulin; it reads MDWGTELWDQ…EMKQERKMHF (117 aa). Positions 1-264 constitute an F-BAR domain; the sequence is MDWGTELWDQ…AANAVDPKND (264 aa). The stretch at 67–259 forms a coiled coil; sequence FSQQQSFVQI…EGMKVAANAV (193 aa). 3 disordered regions span residues 280-358, 390-420, and 479-543; these read GDVE…GRDP, DFSH…EVDQ, and RGDS…SPIG. Over residues 289–302 the composition is skewed to polar residues; that stretch reads QPMNRAPSDSSLGT. An interaction with CDC42 region spans residues 293–537; the sequence is RAPSDSSLGT…TEFDEDFEEE (245 aa). An interaction with PDE6G region spans residues 293-601; it reads RAPSDSSLGT…PTSYLRVTLN (309 aa). 3 positions are modified to phosphoserine: Ser-296, Ser-298, and Ser-299. The segment covering 314 to 329 has biased composition (basic residues); sequence GRSRTKRWPFGKKNKP. Residue Ser-335 is modified to Phosphoserine. Over residues 336–346 the composition is skewed to low complexity; that stretch reads PLGGPVPSALP. Ser-351 carries the post-translational modification Phosphoserine. Positions 388–481 form a coiled coil; it reads TEDFSHLPPE…ESRVLSNRGD (94 aa). In terms of domain architecture, REM-1 spans 393–470; it reads HLPPEQQRKR…VQKYEAWLAE (78 aa). The span at 407–420 shows a compositional bias: basic and acidic residues; it reads LEERSRELQKEVDQ. Residues 471–601 are required for interaction with FASLG and localization to lysosomes; the sequence is AESRVLSNRG…PTSYLRVTLN (131 aa). At Ser-482 the chain carries Phosphoserine. The tract at residues 487-541 is interaction with DNM2 and WASL; that stretch reads ARPPDPPASAPPDSSSNSASQDTKESSEEPPSEESQDTPIYTEFDEDFEEEPTSP. Residues 497-506 are compositionally biased toward low complexity; sequence PPDSSSNSAS. Positions 529-538 are enriched in acidic residues; that stretch reads EFDEDFEEEP. Residues 529-601 are interaction with DNM1 and WASL; it reads EFDEDFEEEP…PTSYLRVTLN (73 aa). Residues 538-601 are required for podosome formation; that stretch reads PTSPIGHCVA…PTSYLRVTLN (64 aa). An SH3 domain is found at 540 to 601; that stretch reads SPIGHCVAIY…PTSYLRVTLN (62 aa). The interaction with WAS stretch occupies residues 544–601; it reads HCVAIYHFEGSSEGTISMAEGEDLSLMEEDKGDGWTRVRRKEGGEGYVPTSYLRVTLN. The segment at 546–601 is interaction with ARHGAP17, DAAM1, DIAPH1 and DIAPH2; sequence VAIYHFEGSSEGTISMAEGEDLSLMEEDKGDGWTRVRRKEGGEGYVPTSYLRVTLN.

This sequence belongs to the FNBP1 family. As to quaternary structure, interacts specifically with GTP-bound RHOQ. Interacts with DNM2 and PDE6G. Homodimerizes, the dimers can polymerize end-to-end to form filamentous structures. Interacts specifically with GTP-bound CDC42. Interacts with AKAP9, ARHGAP17, DAAM1, DIAPH1, DIAPH2, DNM1, FASLG/FASL, GAPVD1, LYN, microtubules, SRC, WAS/WASP and WASL/N-WASP. Interacts with the ligand binding domain of the thyroid receptor (TR) in the presence of thyroid hormone. May interact with CTNNB1 and HD/HTT. Tyrosine phosphorylated. Also phosphorylated by PKA. Expressed in brain, colon, heart, kidney, liver, lung, megakaryocyte, ovary, pancreas, peripheral blood lymphocytes, placenta, prostate, skeletal muscle, small intestine, spleen, testis, thymus and trachea.

Its subcellular location is the cytoplasm. The protein localises to the cytoskeleton. The protein resides in the cell cortex. It is found in the lysosome. It localises to the golgi apparatus. Its subcellular location is the cell membrane. The protein localises to the cell projection. The protein resides in the phagocytic cup. It is found in the perinuclear region. In terms of biological role, required for translocation of GLUT4 to the plasma membrane in response to insulin signaling. Required to coordinate membrane tubulation with reorganization of the actin cytoskeleton during endocytosis. Binds to lipids such as phosphatidylinositol 4,5-bisphosphate and phosphatidylserine and promotes membrane invagination and the formation of tubules. Also promotes CDC42-induced actin polymerization by recruiting WASL/N-WASP which in turn activates the Arp2/3 complex. Actin polymerization may promote the fission of membrane tubules to form endocytic vesicles. Required for the formation of podosomes, actin-rich adhesion structures specific to monocyte-derived cells. May be required for the lysosomal retention of FASLG/FASL. The chain is Cdc42-interacting protein 4 (TRIP10) from Homo sapiens (Human).